The chain runs to 107 residues: Iron-binding protein IscA (107 aa).

Residues Cys-35, Cys-99, and Cys-101 each coordinate Fe cation.

This sequence belongs to the HesB/IscA family. Homodimer; may form tetramers and higher multimers. Fe cation serves as cofactor.

Is able to transfer iron-sulfur clusters to apo-ferredoxin. Multiple cycles of [2Fe2S] cluster formation and transfer are observed, suggesting that IscA acts catalytically. Recruits intracellular free iron so as to provide iron for the assembly of transient iron-sulfur cluster in IscU in the presence of IscS, L-cysteine and the thioredoxin reductase system TrxA/TrxB. The chain is Iron-binding protein IscA from Photorhabdus laumondii subsp. laumondii (strain DSM 15139 / CIP 105565 / TT01) (Photorhabdus luminescens subsp. laumondii).